Here is an 87-residue protein sequence, read N- to C-terminus: uncharacterized protein (87 aa).

An N-terminal signal peptide occupies residues 1 to 25 (MKIRKILLSSALSFGMLISAVPALA).

This is an uncharacterized protein from Bacillus subtilis (strain 168).